The primary structure comprises 1075 residues: Ataxin-2-like protein (1075 aa).

N-acetylmethionine is present on methionine 1. Low complexity predominate over residues 1–12; the sequence is MLKPQPLQQPSQ. The segment at 1 to 115 is disordered; the sequence is MLKPQPLQQP…KGPPQSPVFE (115 aa). The interval 98–121 is interaction with MPL; sequence SARGQSTGKGPPQSPVFEGVYNNS. Phosphoserine occurs at positions 103 and 111. Tyrosine 118 carries the phosphotyrosine modification. Residues 122-199 enclose the Sm domain; that stretch reads RMLHFLTAVV…VMLVHFRNVD (78 aa). N6-acetyllysine is present on lysine 207. A Phosphoserine modification is found at serine 238. Tyrosine 264 carries the post-translational modification Phosphotyrosine. Serine 306 bears the Phosphoserine mark. Phosphotyrosine is present on tyrosine 309. Residues 316–328 are compositionally biased toward basic and acidic residues; that stretch reads ENDDGRTEEEKHS. Disordered regions lie at residues 316–521, 551–697, 733–770, 820–849, 865–940, and 1022–1045; these read ENDD…LEPQ, QFKL…SIPV, VSNSVPGQQGKYRGAKGSLPPQRSDQHQPASAPPMMQA, SNPRMLTSGSHPQAIVSSSTPQYPSAEQPT, ATQL…SSFP, and PYIGHPQGEQPGQAPGFPGGADDR. Residues 330-342 are compositionally biased toward polar residues; it reads VQRQGSGRESPSL. Phosphoserine is present on residues serine 335 and serine 339. Residue lysine 348 forms a Glycyl lysine isopeptide (Lys-Gly) (interchain with G-Cter in SUMO2) linkage. Residue tyrosine 349 is modified to Phosphotyrosine. Arginine 361 carries the asymmetric dimethylarginine modification. Residues 363–380 show a composition bias toward low complexity; that stretch reads GVRCSSSRGGRPGLSSLP. Serine 391 and serine 409 each carry phosphoserine. A compositionally biased stretch (polar residues) spans 421–433; that stretch reads TLSSPSNRPSGET. At serine 449 the chain carries Phosphoserine. Low complexity-rich tracts occupy residues 450–462 and 471–485; these read PKSAAPAPISASC and VPTSSASIPVTSSVS. Serine 493 and serine 496 each carry phosphoserine. Basic and acidic residues predominate over residues 505 to 516; it reads DVKELSTKEPGR. Serine 557, serine 558, serine 559, and serine 563 each carry phosphoserine. Over residues 571–584 the composition is skewed to basic and acidic residues; the sequence is ILKEEPKGKEKEVD. Serine 594 is subject to Phosphoserine. Position 632 is a phosphothreonine (threonine 632). Serine 634, serine 674, serine 680, and serine 684 each carry phosphoserine. Low complexity-rich tracts occupy residues 678 to 694 and 761 to 770; these read STSTPTSPGPRTHSTPS and PASAPPMMQA. A compositionally biased stretch (polar residues) spans 874–898; that stretch reads QPATTPTGSQPQSQHAAPSPVQHQA. Low complexity-rich tracts occupy residues 931-940 and 1025-1037; these read SAQSPQSSFP and GHPQGEQPGQAPG.

The protein belongs to the ataxin-2 family. In terms of assembly, interacts with MPL/TPOR and EPOR and dissociates after ligand stimulation. Interacts with DDX6, G3BP1, and ATXN2. Interacts with PRMT1. Interacts with CIC and ATXN1. Post-translationally, thrombopoietin triggers the phosphorylation on tyrosine residues in a way that is dependent on MPL C-terminal domain. In terms of processing, asymmetrically dimethylated. Probably methylated by PRMT1. As to expression, expressed at high levels in thymus, lymph node, spleen, fetal kidney and adult testis. Constitutively associated with MPL and EPOR in hematopoietic cells.

Its subcellular location is the membrane. The protein resides in the cytoplasm. It localises to the nucleus speckle. The protein localises to the cytoplasmic granule. Its function is as follows. Involved in the regulation of stress granule and P-body formation. The chain is Ataxin-2-like protein (ATXN2L) from Homo sapiens (Human).